The primary structure comprises 310 residues: MTGPGELAGSRPVDAHLENGAGIDVVLVTGLSGAGRGTAAKVLEDLGWYVADNLPPQLITRMVDLGMDAGSRITQLAVVMDVRSRGFTGDLDSVRTELATRNIAPRVVFMEASDDMLVRRYEQNRRSHPLQGDQTLAEGIAAERRMLAPVRATADLIIDTSTLSVRALRETIERAFGGGANATISVTVESFGFKYGLPMDADMVMDVRFLPNPHWVDELRPRTGQDPAVRDYVLGQPGAAEFLDAYHRLLSLVVDGYRREGKRYMTVAIGCTGGKHRSVAIAEALMQRLQAQHGEAQLSVRVLHRDLGRE.

30-37 provides a ligand contact to ATP; the sequence is GLSGAGRG. 81-84 contacts GTP; the sequence is DVRS.

The protein belongs to the RapZ-like family.

Displays ATPase and GTPase activities. This is Nucleotide-binding protein MAP_1147 from Mycolicibacterium paratuberculosis (strain ATCC BAA-968 / K-10) (Mycobacterium paratuberculosis).